The sequence spans 1380 residues: DNA-directed RNA polymerase subunit beta (1380 aa).

Belongs to the RNA polymerase beta chain family. In terms of assembly, the RNAP catalytic core consists of 2 alpha, 1 beta, 1 beta' and 1 omega subunit. When a sigma factor is associated with the core the holoenzyme is formed, which can initiate transcription.

The catalysed reaction is RNA(n) + a ribonucleoside 5'-triphosphate = RNA(n+1) + diphosphate. Its function is as follows. DNA-dependent RNA polymerase catalyzes the transcription of DNA into RNA using the four ribonucleoside triphosphates as substrates. This is DNA-directed RNA polymerase subunit beta from Ehrlichia ruminantium (strain Gardel).